The primary structure comprises 109 residues: Large ribosomal subunit protein uL22 (109 aa).

This sequence belongs to the universal ribosomal protein uL22 family. In terms of assembly, part of the 50S ribosomal subunit.

In terms of biological role, this protein binds specifically to 23S rRNA; its binding is stimulated by other ribosomal proteins, e.g. L4, L17, and L20. It is important during the early stages of 50S assembly. It makes multiple contacts with different domains of the 23S rRNA in the assembled 50S subunit and ribosome. The globular domain of the protein is located near the polypeptide exit tunnel on the outside of the subunit, while an extended beta-hairpin is found that lines the wall of the exit tunnel in the center of the 70S ribosome. The protein is Large ribosomal subunit protein uL22 of Dechloromonas aromatica (strain RCB).